Reading from the N-terminus, the 538-residue chain is Chaperonin GroEL 2 (538 aa).

Residues 29-32 (TLGP), 86-90 (DGTTT), Gly-412, 479-481 (NAA), and Asp-495 contribute to the ATP site.

It belongs to the chaperonin (HSP60) family. In terms of assembly, forms a cylinder of 14 subunits composed of two heptameric rings stacked back-to-back. Interacts with the co-chaperonin GroES.

The protein localises to the cytoplasm. The catalysed reaction is ATP + H2O + a folded polypeptide = ADP + phosphate + an unfolded polypeptide.. In terms of biological role, together with its co-chaperonin GroES, plays an essential role in assisting protein folding. The GroEL-GroES system forms a nano-cage that allows encapsulation of the non-native substrate proteins and provides a physical environment optimized to promote and accelerate protein folding. This Renibacterium salmoninarum (strain ATCC 33209 / DSM 20767 / JCM 11484 / NBRC 15589 / NCIMB 2235) protein is Chaperonin GroEL 2.